Reading from the N-terminus, the 469-residue chain is Glutamate--tRNA ligase (469 aa).

The 'HIGH' region motif lies at 9-19 (PSPTGFLHVGG). Zn(2+) contacts are provided by cysteine 98, cysteine 100, cysteine 125, and aspartate 127. The 'KMSKS' region signature appears at 236 to 240 (KLSKR). Lysine 239 contacts ATP.

The protein belongs to the class-I aminoacyl-tRNA synthetase family. Glutamate--tRNA ligase type 1 subfamily. In terms of assembly, monomer. Zn(2+) serves as cofactor.

The protein localises to the cytoplasm. It carries out the reaction tRNA(Glu) + L-glutamate + ATP = L-glutamyl-tRNA(Glu) + AMP + diphosphate. Its function is as follows. Catalyzes the attachment of glutamate to tRNA(Glu) in a two-step reaction: glutamate is first activated by ATP to form Glu-AMP and then transferred to the acceptor end of tRNA(Glu). The sequence is that of Glutamate--tRNA ligase from Shewanella halifaxensis (strain HAW-EB4).